The sequence spans 315 residues: Biotin synthase (315 aa).

A Radical SAM core domain is found at 39–266 (NSLQFATLLS…KSAIRLTAGR (228 aa)). [4Fe-4S] cluster is bound by residues C54, C58, and C61. Residues C98, C129, C189, and R261 each contribute to the [2Fe-2S] cluster site.

The protein belongs to the radical SAM superfamily. Biotin synthase family. Homodimer. The cofactor is [4Fe-4S] cluster. Requires [2Fe-2S] cluster as cofactor.

The enzyme catalyses (4R,5S)-dethiobiotin + (sulfur carrier)-SH + 2 reduced [2Fe-2S]-[ferredoxin] + 2 S-adenosyl-L-methionine = (sulfur carrier)-H + biotin + 2 5'-deoxyadenosine + 2 L-methionine + 2 oxidized [2Fe-2S]-[ferredoxin]. The protein operates within cofactor biosynthesis; biotin biosynthesis; biotin from 7,8-diaminononanoate: step 2/2. Functionally, catalyzes the conversion of dethiobiotin (DTB) to biotin by the insertion of a sulfur atom into dethiobiotin via a radical-based mechanism. In Legionella pneumophila (strain Lens), this protein is Biotin synthase.